Consider the following 136-residue polypeptide: MKNLSIFMFVFSLCMFGHVSRARIRIANELKFKKNLWMRCYSKDDVLGPHIIPIGGHFLDYFGTNFWGTTRFMCTLRQGPNYIHYQSFTAFKLFSMEDHGGLWDWRAREDGIYLKKEGNKFIKNPVNMHKVYDWIN.

A signal peptide spans 1-22; the sequence is MKNLSIFMFVFSLCMFGHVSRA.

It belongs to the plant self-incompatibility (S1) protein family.

Its subcellular location is the secreted. This is S-protein homolog 17 from Arabidopsis thaliana (Mouse-ear cress).